The following is a 720-amino-acid chain: Mitogen-activated protein kinase 6 (720 aa).

A Peptide (Met-Gly) (interchain with G-Cter in ubiquitin) cross-link involves residue methionine 1. The Protein kinase domain maps to 20-316; the sequence is YMDLKPLGCG…AEEALSHPYM (297 aa). ATP-binding positions include 26 to 34 and lysine 49; that span reads LGCGGNGLV. Catalysis depends on aspartate 152, which acts as the Proton acceptor. Position 189 is a phosphoserine; by PAK1, PAK2 and PAK3 (serine 189). Residues 189–191 carry the SEG motif motif; the sequence is SEG. The FRIEDE motif signature appears at 332–337; the sequence is FHIEDE. Residues serine 386, serine 452, serine 554, and serine 556 each carry the phosphoserine modification. The disordered stretch occupies residues 638-657; sequence SEMLETEPVEEGKRGERGRE. Positions 647-657 are enriched in basic and acidic residues; sequence EEGKRGERGRE. The residue at position 683 (serine 683) is a Phosphoserine. A compositionally biased stretch (polar residues) spans 698 to 714; it reads PSAMKSSPQIPHKTYSN. The tract at residues 698–720 is disordered; sequence PSAMKSSPQIPHKTYSNILKHLN.

Belongs to the protein kinase superfamily. CMGC Ser/Thr protein kinase family. MAP kinase subfamily. Heterodimer with ERK4/MAPK4. Interacts with (via FRIEDE motif) MAPKAPK5. Interacts with UBE3A; this interaction may be indirect and mediated by HERC2, possibly via HERC2 interaction with NEURL4. Mg(2+) serves as cofactor. Phosphorylated at Ser-189 by PAK1, PAK2 and PAK3 resulting in catalytic activation. Phosphorylated by MAPKAPK5 at other sites. Post-translationally, ubiquitination at Met-1 leads to degradation by the proteasome pathway. As to expression, highest levels within the nervous system, expressed in different tissues, mostly in skeletal muscle.

It is found in the cytoplasm. The protein resides in the nucleus. The enzyme catalyses L-seryl-[protein] + ATP = O-phospho-L-seryl-[protein] + ADP + H(+). The catalysed reaction is L-threonyl-[protein] + ATP = O-phospho-L-threonyl-[protein] + ADP + H(+). Its activity is regulated as follows. Activated by phosphorylation at Ser-189. Its function is as follows. Atypical MAPK protein. Phosphorylates microtubule-associated protein 2 (MAP2) and MAPKAPK5. The precise role of the complex formed with MAPKAPK5 is still unclear, but the complex follows a complex set of phosphorylation events: upon interaction with atypical MAPKAPK5, ERK3/MAPK6 is phosphorylated at Ser-189 and then mediates phosphorylation and activation of MAPKAPK5, which in turn phosphorylates ERK3/MAPK6. May promote entry in the cell cycle. The polypeptide is Mitogen-activated protein kinase 6 (Mapk6) (Rattus norvegicus (Rat)).